We begin with the raw amino-acid sequence, 299 residues long: tRNA-cytidine(32) 2-sulfurtransferase (299 aa).

The PP-loop motif motif lies at 49-54 (SGGKDS). [4Fe-4S] cluster is bound by residues Cys-124, Cys-127, and Cys-215.

This sequence belongs to the TtcA family. As to quaternary structure, homodimer. Mg(2+) is required as a cofactor. Requires [4Fe-4S] cluster as cofactor.

It is found in the cytoplasm. It carries out the reaction cytidine(32) in tRNA + S-sulfanyl-L-cysteinyl-[cysteine desulfurase] + AH2 + ATP = 2-thiocytidine(32) in tRNA + L-cysteinyl-[cysteine desulfurase] + A + AMP + diphosphate + H(+). It functions in the pathway tRNA modification. In terms of biological role, catalyzes the ATP-dependent 2-thiolation of cytidine in position 32 of tRNA, to form 2-thiocytidine (s(2)C32). The sulfur atoms are provided by the cysteine/cysteine desulfurase (IscS) system. In Deinococcus radiodurans (strain ATCC 13939 / DSM 20539 / JCM 16871 / CCUG 27074 / LMG 4051 / NBRC 15346 / NCIMB 9279 / VKM B-1422 / R1), this protein is tRNA-cytidine(32) 2-sulfurtransferase.